Reading from the N-terminus, the 642-residue chain is Threonine--tRNA ligase (642 aa).

In terms of domain architecture, TGS spans 1–61 (MPIITLPDGS…EADASLAIIT (61 aa)). The catalytic stretch occupies residues 243-534 (DHRKIGKQLD…LTEEYAGLFP (292 aa)). Residues C334, H385, and H511 each coordinate Zn(2+).

This sequence belongs to the class-II aminoacyl-tRNA synthetase family. In terms of assembly, homodimer. Zn(2+) is required as a cofactor.

It localises to the cytoplasm. It carries out the reaction tRNA(Thr) + L-threonine + ATP = L-threonyl-tRNA(Thr) + AMP + diphosphate + H(+). Functionally, catalyzes the attachment of threonine to tRNA(Thr) in a two-step reaction: L-threonine is first activated by ATP to form Thr-AMP and then transferred to the acceptor end of tRNA(Thr). Also edits incorrectly charged L-seryl-tRNA(Thr). The sequence is that of Threonine--tRNA ligase from Aeromonas hydrophila subsp. hydrophila (strain ATCC 7966 / DSM 30187 / BCRC 13018 / CCUG 14551 / JCM 1027 / KCTC 2358 / NCIMB 9240 / NCTC 8049).